A 159-amino-acid polypeptide reads, in one-letter code: tRNA-specific adenosine deaminase (159 aa).

The 128-residue stretch at 6–133 (EEQTYFMQEA…ERLNHRVQVE (128 aa)) folds into the CMP/dCMP-type deaminase domain. His-57 contacts Zn(2+). Catalysis depends on Glu-59, which acts as the Proton donor. Residues Cys-87 and Cys-90 each contribute to the Zn(2+) site.

It belongs to the cytidine and deoxycytidylate deaminase family. As to quaternary structure, homodimer. The cofactor is Zn(2+).

It carries out the reaction adenosine(34) in tRNA + H2O + H(+) = inosine(34) in tRNA + NH4(+). Its function is as follows. Catalyzes the deamination of adenosine to inosine at the wobble position 34 of tRNA(Arg2). The sequence is that of tRNA-specific adenosine deaminase from Streptococcus pyogenes serotype M18 (strain MGAS8232).